We begin with the raw amino-acid sequence, 287 residues long: F-actin-capping protein subunit beta (287 aa).

S2 carries the post-translational modification N-acetylserine. S85 and S92 each carry phosphoserine.

This sequence belongs to the F-actin-capping protein beta subunit family. As to quaternary structure, component of the F-actin capping complex, composed of a heterodimer of an alpha and a beta subunit. Interacts with BSP1 (via C-terminus); leading to recruitment of the F-actin capping complex to actin cortical patches and the acomyosin contractile ring.

Its subcellular location is the cytoplasm. The protein resides in the cytoskeleton. It is found in the actin patch. It localises to the bud. The protein localises to the bud tip. Functionally, F-actin-capping proteins bind in a Ca(2+)-independent manner to the fast growing ends of actin filaments (barbed end) thereby blocking the exchange of subunits at these ends. Unlike other capping proteins (such as gelsolin and severin), these proteins do not sever actin filaments. This Saccharomyces cerevisiae (strain ATCC 204508 / S288c) (Baker's yeast) protein is F-actin-capping protein subunit beta (CAP2).